The sequence spans 208 residues: Fibroblast growth factor 6 (208 aa).

A signal peptide spans 1–37; the sequence is MALGQRLFITMSRGAGRVQGTLQALVFLGVLVGMVVP. N-linked (GlcNAc...) asparagine glycosylation occurs at Asn45. Cys90 and Cys157 form a disulfide bridge.

The protein belongs to the heparin-binding growth factors family. In terms of assembly, interacts with FGFR1, FGFR2 and FGFR4. Affinity between fibroblast growth factors (FGFs) and their receptors is increased by heparan sulfate glycosaminoglycans that function as coreceptors. Embryos, adult muscles and adult testis.

It is found in the secreted. It localises to the extracellular space. Plays an important role in the regulation of cell proliferation, cell differentiation, angiogenesis and myogenesis, and is required for normal muscle regeneration. The sequence is that of Fibroblast growth factor 6 (Fgf6) from Mus musculus (Mouse).